A 161-amino-acid chain; its full sequence is Phosphopantetheine adenylyltransferase (161 aa).

Ser-9 is a substrate binding site. ATP is bound by residues 9-10 (SF) and His-17. Lys-41, Thr-73, and Arg-87 together coordinate substrate. Residues 88–90 (GLR), Glu-98, and 123–129 (FAHISST) each bind ATP.

Belongs to the bacterial CoaD family. In terms of assembly, homohexamer. The cofactor is Mg(2+).

Its subcellular location is the cytoplasm. The catalysed reaction is (R)-4'-phosphopantetheine + ATP + H(+) = 3'-dephospho-CoA + diphosphate. It functions in the pathway cofactor biosynthesis; coenzyme A biosynthesis; CoA from (R)-pantothenate: step 4/5. Reversibly transfers an adenylyl group from ATP to 4'-phosphopantetheine, yielding dephospho-CoA (dPCoA) and pyrophosphate. This Chloroflexus aggregans (strain MD-66 / DSM 9485) protein is Phosphopantetheine adenylyltransferase.